The following is a 348-amino-acid chain: Galanin receptor type 1 (348 aa).

Residues 1–34 are Extracellular-facing; it reads MELAMVNLSEGNGSDPEPPAPESRPLFGIGVENF. N-linked (GlcNAc...) asparagine glycans are attached at residues asparagine 7 and asparagine 12. A helical transmembrane segment spans residues 35-55; that stretch reads ITLVVFGLIFAMGVLGNSLVI. At 56 to 70 the chain is on the cytoplasmic side; that stretch reads TVLARSKPGKPRSTT. A helical transmembrane segment spans residues 71 to 91; the sequence is NLFILNLSIADLAYLLFCIPF. The Extracellular portion of the chain corresponds to 92–109; it reads QATVYALPTWVLGAFICK. Cysteines 108 and 186 form a disulfide. Residues 110–131 traverse the membrane as a helical segment; it reads FIHYFFTVSMLVSIFTLAAMSV. Over 132-151 the chain is Cytoplasmic; that stretch reads DRYVAIVHSRRSSSLRVSRN. A helical membrane pass occupies residues 152–172; the sequence is ALLGVGFIWALSIAMASPVAY. Residues 173–197 are Extracellular-facing; that stretch reads HQRLFHRDSNQTFCWEQWPNKLHKK. Asparagine 182 carries N-linked (GlcNAc...) asparagine glycosylation. A helical transmembrane segment spans residues 198–218; it reads AYVVCTFVFGYLLPLLLICFC. The Cytoplasmic segment spans residues 219 to 247; sequence YAKVLNHLHKKLKNMSKKSEASKKKTAQT. A helical transmembrane segment spans residues 248–268; it reads VLVVVVVFGISWLPHHVVHLW. Over 269-270 the chain is Extracellular; sequence AE. Residues 271–291 form a helical membrane-spanning segment; it reads FGAFPLTPASFFFRITAHCLA. The Cytoplasmic portion of the chain corresponds to 292-348; that stretch reads YSNSSVNPIIYAFLSENFRKAYKQVFKCHVCDESPRSETKENKSRMDTPPSTNCTHV. Cysteine 319 is lipidated: S-palmitoyl cysteine. Over residues 328 to 337 the composition is skewed to basic and acidic residues; sequence SETKENKSRM. Residues 328-348 form a disordered region; the sequence is SETKENKSRMDTPPSTNCTHV.

This sequence belongs to the G-protein coupled receptor 1 family. In terms of assembly, interacts with GRP39 AND HTR1A. Three cysteine residues are found in the C-terminus, at least one of which may be palmitoylated. In terms of tissue distribution, expression is detected in brain, spinal cord, heart and skeletal muscle.

It is found in the cell membrane. Functionally, receptor for the hormone galanin. The activity of this receptor is mediated by G proteins that inhibit adenylate cyclase activity. The protein is Galanin receptor type 1 (Galr1) of Mus musculus (Mouse).